The sequence spans 274 residues: Glutamate--cysteine ligase regulatory subunit (274 aa).

Ser59 is modified (phosphoserine). Position 263 is an N6-acetyllysine (Lys263).

This sequence belongs to the aldo/keto reductase family. Glutamate--cysteine ligase light chain subfamily. Heterodimer of a catalytic heavy chain and a regulatory light chain. As to expression, most abundant in kidney. Also found in liver and testis.

It functions in the pathway sulfur metabolism; glutathione biosynthesis; glutathione from L-cysteine and L-glutamate: step 1/2. The chain is Glutamate--cysteine ligase regulatory subunit (Gclm) from Rattus norvegicus (Rat).